The chain runs to 353 residues: tRNA N6-adenosine threonylcarbamoyltransferase (353 aa).

Fe cation contacts are provided by H109 and H113. Substrate-binding positions include 136–140, D169, G182, D186, and N284; that span reads TVSGG. Residue D312 coordinates Fe cation.

It belongs to the KAE1 / TsaD family. Fe(2+) serves as cofactor.

It localises to the cytoplasm. The enzyme catalyses L-threonylcarbamoyladenylate + adenosine(37) in tRNA = N(6)-L-threonylcarbamoyladenosine(37) in tRNA + AMP + H(+). Functionally, required for the formation of a threonylcarbamoyl group on adenosine at position 37 (t(6)A37) in tRNAs that read codons beginning with adenine. Is involved in the transfer of the threonylcarbamoyl moiety of threonylcarbamoyl-AMP (TC-AMP) to the N6 group of A37, together with TsaE and TsaB. TsaD likely plays a direct catalytic role in this reaction. This Chlorobium phaeobacteroides (strain DSM 266 / SMG 266 / 2430) protein is tRNA N6-adenosine threonylcarbamoyltransferase.